The following is a 565-amino-acid chain: MRQSLTFIPTLREVPADAEAKSHQLLVRAGFIRQNTSGIYHYLPLAHKVIQHIQSIVRKEMEKAGAAELLMPVLQQAEMWQESGRWYTYGPELMRMKDRHGREFALGPTHEEVITSLVRSEVKSYKKLPLTLYQIQSKFRDEQRPRFGLLRGREFIMKDAYSFHSSPESLDDTYNKMFTAYSNVFSKVGLNFRPVIADSGAMGGKDTHEFMALSEVGEDTIAYSDTSSYAANIEMAEAVYQGEEANPADFKELEKVHTPQVKTIQDIAGFLDVDPSLCIKSVLFKADDAYVLILTRGDHEVNDVKVKNLVGAQLVELATREEVLEVIGTEPGFVGPVKLEAEVDIYADLTVKGMTNAVAGANEADYHYVNVNPARDVSVKEFTDLRFIQEGDVSPDGEGTIQFAKGIEVGQVFKLGTRYSESMDATYLDENGRAQPMIMGCYGIGISRTLSAIVEQHHDEKGIIWPEAVAPYDLHLLALNMKNDAQKELAETLYERLENEGFDVLFDDRQERAGVKFADSDLIGLPIRISCGKRSEEGIVEVKFRKSGESHEVSVDELISFIRQA.

This sequence belongs to the class-II aminoacyl-tRNA synthetase family. ProS type 1 subfamily. Homodimer.

The protein resides in the cytoplasm. The enzyme catalyses tRNA(Pro) + L-proline + ATP = L-prolyl-tRNA(Pro) + AMP + diphosphate. Catalyzes the attachment of proline to tRNA(Pro) in a two-step reaction: proline is first activated by ATP to form Pro-AMP and then transferred to the acceptor end of tRNA(Pro). As ProRS can inadvertently accommodate and process non-cognate amino acids such as alanine and cysteine, to avoid such errors it has two additional distinct editing activities against alanine. One activity is designated as 'pretransfer' editing and involves the tRNA(Pro)-independent hydrolysis of activated Ala-AMP. The other activity is designated 'posttransfer' editing and involves deacylation of mischarged Ala-tRNA(Pro). The misacylated Cys-tRNA(Pro) is not edited by ProRS. The protein is Proline--tRNA ligase of Bacillus pumilus (strain SAFR-032).